Consider the following 227-residue polypeptide: Thymidylate kinase (227 aa).

Residue 16-23 (GIDGAGKT) participates in ATP binding.

The protein belongs to the thymidylate kinase family.

The enzyme catalyses dTMP + ATP = dTDP + ADP. Functionally, phosphorylation of dTMP to form dTDP in both de novo and salvage pathways of dTTP synthesis. This is Thymidylate kinase from Xanthomonas campestris pv. campestris (strain 8004).